The following is a 330-amino-acid chain: uncharacterized protein (330 aa).

Residues 96–256 form the JmjC domain; that stretch reads AALEFDFTDL…LMLAALRKKL (161 aa). The Fe cation site is built by His-145, Asp-147, and His-224.

The protein belongs to the ROX family. Fe(2+) is required as a cofactor.

This is an uncharacterized protein from Bacillus subtilis (strain 168).